A 908-amino-acid polypeptide reads, in one-letter code: Metabotropic glutamate receptor 8 (908 aa).

An N-terminal signal peptide occupies residues 1 to 33 (MVCEGKRSTSCPCFFLLTAKFYWILTMMQRTHS). At 34 to 583 (QEYAHSIRLD…IIKLEWHSPW (550 aa)) the chain is on the extracellular side. Cys64 and Cys106 are oxidised to a cystine. Residue Asn95 is glycosylated (N-linked (GlcNAc...) asparagine). Residues Ser156, 177–179 (AST), and Tyr227 each bind L-glutamate. Intrachain disulfides connect Cys246/Cys534, Cys369/Cys384, Cys424/Cys431, Cys516/Cys535, Cys520/Cys538, Cys541/Cys553, and Cys556/Cys569. Asn298 is a glycosylation site (N-linked (GlcNAc...) asparagine). Residue Asp309 participates in L-glutamate binding. Lys401 is an L-glutamate binding site. 2 N-linked (GlcNAc...) asparagine glycosylation sites follow: Asn452 and Asn480. Residue Asn565 is glycosylated (N-linked (GlcNAc...) asparagine). A helical transmembrane segment spans residues 584–608 (AVVPVFIAILGIIATTFVIVTFVRY). Over 609-620 (NDTPIVRASGRE) the chain is Cytoplasmic. A helical membrane pass occupies residues 621–641 (LSYVLLTGIFLCYSITFLMIA). Residues 642 to 647 (APDTII) lie on the Extracellular side of the membrane. A helical membrane pass occupies residues 648–668 (CSFRRIFLGLGMCFSYAALLT). At 669–695 (KTNRIHRIFEQGKKSVTAPKFISPASQ) the chain is on the cytoplasmic side. The chain crosses the membrane as a helical span at residues 696-716 (LVITFSLISVQLLGVFVWFVV). Topologically, residues 717–746 (DPPHTIIDYGEQRTLDPENARGVLKCDISD) are extracellular. The chain crosses the membrane as a helical span at residues 747 to 768 (LSLICSLGYSILLMVTCTVYAI). Over 769 to 781 (KTRGVPETFNEAK) the chain is Cytoplasmic. A helical transmembrane segment spans residues 782-803 (PIGFTMYTTCIIWLAFIPIFFG). Residues 804–818 (TAQSAEKMYIQTTTL) are Extracellular-facing. Residues 819–843 (TVSMSLSASVSLGMLYMPKVYIIIF) form a helical membrane-spanning segment. At 844 to 908 (HPEQNVQKRK…TYISYSNHSI (65 aa)) the chain is on the cytoplasmic side. A Glycyl lysine isopeptide (Lys-Gly) (interchain with G-Cter in SUMO1) cross-link involves residue Lys882.

This sequence belongs to the G-protein coupled receptor 3 family. Interacts with PICK1. In terms of tissue distribution, strongly expressed in olfactory bulb, accessory olfactory bulb, and mammillary body. Weaker expression in the retina, and in scattered cells in the cortex and hindbrain.

The protein localises to the cell membrane. Its function is as follows. G-protein coupled receptor for glutamate. Ligand binding causes a conformation change that triggers signaling via guanine nucleotide-binding proteins (G proteins) and modulates the activity of down-stream effectors. Signaling inhibits adenylate cyclase activity. This chain is Metabotropic glutamate receptor 8 (Grm8), found in Mus musculus (Mouse).